Here is a 101-residue protein sequence, read N- to C-terminus: Large ribosomal subunit protein bL27 (101 aa).

A disordered region spans residues 1 to 21; it reads MAHKKAGGSSRNGRDSRSKRL.

It belongs to the bacterial ribosomal protein bL27 family.

This Buchnera aphidicola subsp. Cinara cedri (strain Cc) protein is Large ribosomal subunit protein bL27.